Reading from the N-terminus, the 691-residue chain is Elongation factor G (691 aa).

Positions 10 to 284 (KMYRNIGIMA…AIVKYLPSPL (275 aa)) constitute a tr-type G domain. Residues 19–26 (AHIDAGKT), 83–87 (DTPGH), and 137–140 (NKMD) each bind GTP.

It belongs to the TRAFAC class translation factor GTPase superfamily. Classic translation factor GTPase family. EF-G/EF-2 subfamily.

It is found in the cytoplasm. Functionally, catalyzes the GTP-dependent ribosomal translocation step during translation elongation. During this step, the ribosome changes from the pre-translocational (PRE) to the post-translocational (POST) state as the newly formed A-site-bound peptidyl-tRNA and P-site-bound deacylated tRNA move to the P and E sites, respectively. Catalyzes the coordinated movement of the two tRNA molecules, the mRNA and conformational changes in the ribosome. In Clostridium tetani (strain Massachusetts / E88), this protein is Elongation factor G.